The primary structure comprises 172 residues: Large ribosomal subunit protein uL22y (172 aa).

This sequence belongs to the universal ribosomal protein uL22 family.

This is Large ribosomal subunit protein uL22y from Hordeum vulgare (Barley).